The sequence spans 93 residues: Small ribosomal subunit protein uS19 (93 aa).

This sequence belongs to the universal ribosomal protein uS19 family.

Functionally, protein S19 forms a complex with S13 that binds strongly to the 16S ribosomal RNA. This Clostridioides difficile (strain 630) (Peptoclostridium difficile) protein is Small ribosomal subunit protein uS19.